The primary structure comprises 154 residues: Ribosomal RNA large subunit methyltransferase H (154 aa).

Residues L70 and G102 each coordinate S-adenosyl-L-methionine.

The protein belongs to the RNA methyltransferase RlmH family. Homodimer.

It is found in the cytoplasm. The catalysed reaction is pseudouridine(1915) in 23S rRNA + S-adenosyl-L-methionine = N(3)-methylpseudouridine(1915) in 23S rRNA + S-adenosyl-L-homocysteine + H(+). Its function is as follows. Specifically methylates the pseudouridine at position 1915 (m3Psi1915) in 23S rRNA. This chain is Ribosomal RNA large subunit methyltransferase H, found in Hyphomonas neptunium (strain ATCC 15444).